Consider the following 85-residue polypeptide: Putative RING finger protein 095L (85 aa).

The segment at 39–73 (CPIWYNYQVNTVFLPCAHVACYLCSKIIKNCHLCR) adopts an RING-type; degenerate zinc-finger fold.

The protein is Putative RING finger protein 095L of Invertebrate iridescent virus 6 (IIV-6).